The following is a 454-amino-acid chain: GA-binding protein alpha chain (454 aa).

One can recognise a PNT domain in the interval 168–251 (AALEGYRKEQ…SHLELLRKYV (84 aa)). The tract at residues 297 to 316 (QRAPRISGEDRSSPGNRTGN) is disordered. Ser-303 carries the post-translational modification Phosphoserine. Positions 320–400 (IQLWQFLLEL…QGKRFVYKFV (81 aa)) form a DNA-binding region, ETS.

Belongs to the ETS family. In terms of assembly, heterotetramer of two alpha and two beta subunits.

The protein localises to the nucleus. In terms of biological role, transcription factor capable of interacting with purine rich repeats (GA repeats). Positively regulates transcription of transcriptional repressor RHIT/ZNF205. Functionally, (Microbial infection) Necessary for the expression of the Adenovirus E4 gene. The protein is GA-binding protein alpha chain (GABPA) of Homo sapiens (Human).